A 170-amino-acid chain; its full sequence is Guided entry of tail-anchored proteins factor 1 (170 aa).

At 1-6 (MAAGFN) the chain is on the lumenal side. A helical membrane pass occupies residues 7-27 (WFLVLSSVFLCNLVKTFLPSI). The Cytoplasmic portion of the chain corresponds to 28–96 (SSFLSKIFHK…KSRTAQQAKM (69 aa)). Positions 35 to 93 (FHKDADQEMEMRTEIQNMKMELSTISMMDEFARYARLERKINKMTDQLKTLVKSRTAQQ) are interaction with GET3/TRC40. Residues 61–91 (MMDEFARYARLERKINKMTDQLKTLVKSRTA) are a coiled coil. Residues 97–117 (KWIVNIAFYILQAALMISLIL) traverse the membrane as a helical segment. At 118 to 137 (KYYADPVTVVPSKWIAPLER) the chain is on the lumenal side. A helical membrane pass occupies residues 138–158 (LVAFPSGVAGGVGITCWLVVC). Residues 159 to 170 (NKVVALILQAVS) lie on the Cytoplasmic side of the membrane.

Belongs to the WRB/GET1 family. Component of the Golgi to ER traffic (GET) complex, which is composed of GET1/WRB, CAMLG/GET2 and GET3/TRC40. Within the complex, GET1 and CAMLG form a heterotetramer which is stabilized by phosphatidylinositol binding and which binds to the GET3 homodimer.

The protein resides in the endoplasmic reticulum membrane. In terms of biological role, required for the post-translational delivery of tail-anchored (TA) proteins to the endoplasmic reticulum (ER). Together with CAMLG/GET2, acts as a membrane receptor for soluble GET3/TRC40, which recognizes and selectively binds the transmembrane domain of TA proteins in the cytosol. Required to ensure correct topology and ER insertion of CAMLG. This Danio rerio (Zebrafish) protein is Guided entry of tail-anchored proteins factor 1.